The primary structure comprises 355 residues: Tetraacyldisaccharide 4'-kinase (355 aa).

An ATP-binding site is contributed by 64–71 (YVGGTGKT). Residues 206–226 (NRAPQSSATPTAASGQGPRRA) form a disordered region. Over residues 208–222 (APQSSATPTAASGQG) the composition is skewed to low complexity.

It belongs to the LpxK family.

It catalyses the reaction a lipid A disaccharide + ATP = a lipid IVA + ADP + H(+). It functions in the pathway glycolipid biosynthesis; lipid IV(A) biosynthesis; lipid IV(A) from (3R)-3-hydroxytetradecanoyl-[acyl-carrier-protein] and UDP-N-acetyl-alpha-D-glucosamine: step 6/6. In terms of biological role, transfers the gamma-phosphate of ATP to the 4'-position of a tetraacyldisaccharide 1-phosphate intermediate (termed DS-1-P) to form tetraacyldisaccharide 1,4'-bis-phosphate (lipid IVA). The polypeptide is Tetraacyldisaccharide 4'-kinase (Bordetella petrii (strain ATCC BAA-461 / DSM 12804 / CCUG 43448)).